The chain runs to 394 residues: Acetate kinase (394 aa).

A Mg(2+)-binding site is contributed by asparagine 10. ATP is bound at residue lysine 17. Arginine 87 provides a ligand contact to substrate. Catalysis depends on aspartate 144, which acts as the Proton donor/acceptor. Residues 204-208 (HLGNG), 279-281 (DMR), and 327-331 (GIGEN) contribute to the ATP site. Glutamate 381 provides a ligand contact to Mg(2+).

This sequence belongs to the acetokinase family. Homodimer. The cofactor is Mg(2+). Mn(2+) is required as a cofactor.

It localises to the cytoplasm. It catalyses the reaction acetate + ATP = acetyl phosphate + ADP. It functions in the pathway metabolic intermediate biosynthesis; acetyl-CoA biosynthesis; acetyl-CoA from acetate: step 1/2. Its function is as follows. Catalyzes the formation of acetyl phosphate from acetate and ATP. Can also catalyze the reverse reaction. This is Acetate kinase from Ectopseudomonas mendocina (strain ymp) (Pseudomonas mendocina).